The chain runs to 517 residues: L-amino-acid oxidase (517 aa).

A signal peptide spans 1–18 (MNVFFMFSLLFLAALGSC). A disulfide bridge connects residues cysteine 29 and cysteine 192. FAD is bound by residues 62–63 (MA), 82–83 (EA), arginine 90, and 106–109 (GPMR). Arginine 109 is a substrate binding site. Asparagine 191 carries an N-linked (GlcNAc...) asparagine glycan. Valine 280 is a binding site for FAD. Cysteines 350 and 431 form a disulfide. Substrate is bound at residue tyrosine 391. Residues glutamate 476 and 483 to 488 (GWLDST) contribute to the FAD site. A substrate-binding site is contributed by 483 to 484 (GW).

It belongs to the flavin monoamine oxidase family. FIG1 subfamily. Homodimer; non-covalently linked. It depends on FAD as a cofactor. In terms of processing, N-glycosylated. Expressed by the venom gland.

The protein resides in the secreted. It carries out the reaction an L-alpha-amino acid + O2 + H2O = a 2-oxocarboxylate + H2O2 + NH4(+). In terms of biological role, catalyzes an oxidative deamination of predominantly hydrophobic and aromatic L-amino acids, thus producing hydrogen peroxide that may contribute to the diverse toxic effects of this enzyme. Exhibits diverse biological activities, such as hemorrhage, hemolysis, edema, apoptosis of vascular endothelial cells or tumor cell lines, antiparasitic activities, as well as regulation of platelet aggregation. Effects of snake L-amino oxidases on platelets are controversial, since they either induce aggregation or inhibit agonist-induced aggregation. These different effects are probably due to different experimental conditions. This protein has antibacterial activities. This chain is L-amino-acid oxidase, found in Pseudechis australis (Mulga snake).